The primary structure comprises 122 residues: Large ribosomal subunit protein uL14c (122 aa).

It belongs to the universal ribosomal protein uL14 family. Part of the 50S ribosomal subunit.

The protein resides in the plastid. It is found in the chloroplast. Functionally, binds to 23S rRNA. The sequence is that of Large ribosomal subunit protein uL14c from Welwitschia mirabilis (Tree tumbo).